A 157-amino-acid chain; its full sequence is Protein Smg homolog (157 aa).

This sequence belongs to the Smg family.

The chain is Protein Smg homolog from Shewanella frigidimarina (strain NCIMB 400).